A 591-amino-acid chain; its full sequence is 4-coumarate--CoA ligase-like 3 (591 aa).

Residues Ser228, Ser229, Gly230, Thr231, Ser232, and Lys236 each coordinate ATP. Tyr280 is a binding site for (E)-4-coumaroyl-AMP. Arg301 contacts CoA. The segment at 303 to 375 (DAGDAVAAIG…QAFPHVDFIQ (73 aa)) is SBD1. 4 residues coordinate (E)-4-coumaroyl-AMP: Ala353, Gln375, Gly376, and Thr380. Positions 375, 376, 380, 459, and 474 each coordinate ATP. The tract at residues 376 to 440 (GYGMTESTAV…LHGPGIMKGY (65 aa)) is SBD2. 2 residues coordinate (E)-4-coumaroyl-AMP: Lys476 and Lys480. 2 residues coordinate CoA: Lys482 and Gly483. Lys565 serves as a coordination point for ATP.

It belongs to the ATP-dependent AMP-binding enzyme family. Mg(2+) is required as a cofactor.

It carries out the reaction (E)-4-coumarate + ATP + CoA = (E)-4-coumaroyl-CoA + AMP + diphosphate. The enzyme catalyses (E)-4-coumarate + ATP + H(+) = (E)-4-coumaroyl-AMP + diphosphate. It catalyses the reaction (E)-4-coumaroyl-AMP + CoA = (E)-4-coumaroyl-CoA + AMP + H(+). Carboxylate--CoA ligase that may use 4-coumarate as substrate. Follows a two-step reaction mechanism, wherein the carboxylate substrate first undergoes adenylation by ATP, followed by a thioesterification in the presence of CoA to yield the final CoA thioester. The chain is 4-coumarate--CoA ligase-like 3 (4CLL3) from Oryza sativa subsp. japonica (Rice).